Reading from the N-terminus, the 344-residue chain is Ferrochelatase (344 aa).

His-211 and Glu-292 together coordinate Fe cation.

It belongs to the ferrochelatase family.

It localises to the cytoplasm. It catalyses the reaction heme b + 2 H(+) = protoporphyrin IX + Fe(2+). It participates in porphyrin-containing compound metabolism; protoheme biosynthesis; protoheme from protoporphyrin-IX: step 1/1. In terms of biological role, catalyzes the ferrous insertion into protoporphyrin IX. This chain is Ferrochelatase, found in Methylobacillus flagellatus (strain ATCC 51484 / DSM 6875 / VKM B-1610 / KT).